A 637-amino-acid chain; its full sequence is Glutamate--cysteine ligase catalytic subunit (637 aa).

M1 is subject to N-acetylmethionine. Phosphoserine occurs at positions 5 and 8.

It belongs to the glutamate--cysteine ligase type 3 family. In terms of assembly, heterodimer of a catalytic heavy chain and a regulatory light chain. Most abundant in kidney. Also found in liver and testis.

It carries out the reaction L-cysteine + L-glutamate + ATP = gamma-L-glutamyl-L-cysteine + ADP + phosphate + H(+). The enzyme catalyses (2S)-2-aminobutanoate + L-glutamate + ATP = gamma-L-glutamyl-(2S)-2-aminobutanoate + ADP + phosphate + H(+). Its pathway is sulfur metabolism; glutathione biosynthesis; glutathione from L-cysteine and L-glutamate: step 1/2. Its activity is regulated as follows. Feedback inhibition by glutathione. Functionally, catalyzes the ATP-dependent ligation of L-glutamate and L-cysteine and participates in the first and rate-limiting step in glutathione biosynthesis. In Rattus norvegicus (Rat), this protein is Glutamate--cysteine ligase catalytic subunit.